We begin with the raw amino-acid sequence, 452 residues long: Bifunctional protein GlmU (452 aa).

Residues 1–225 (MEVVILAAGQ…VSETLGVNSK (225 aa)) form a pyrophosphorylase region. UDP-N-acetyl-alpha-D-glucosamine contacts are provided by residues 6–9 (LAAG), lysine 20, glutamine 71, 76–77 (GT), 98–100 (YGD), glycine 135, glutamate 150, asparagine 165, and asparagine 223. Mg(2+) is bound at residue aspartate 100. Residue asparagine 223 participates in Mg(2+) binding. The segment at 226-246 (PQLAELERIHQRNIAQRLMED) is linker. The tract at residues 247–452 (GVTLIDPARI…AGWKRPVKQR (206 aa)) is N-acetyltransferase. UDP-N-acetyl-alpha-D-glucosamine contacts are provided by arginine 329 and lysine 347. Residue histidine 359 is the Proton acceptor of the active site. Positions 362 and 373 each coordinate UDP-N-acetyl-alpha-D-glucosamine. Residues alanine 376, 382-383 (NY), serine 401, alanine 419, and arginine 436 contribute to the acetyl-CoA site.

The protein in the N-terminal section; belongs to the N-acetylglucosamine-1-phosphate uridyltransferase family. This sequence in the C-terminal section; belongs to the transferase hexapeptide repeat family. As to quaternary structure, homotrimer. Mg(2+) is required as a cofactor.

The protein resides in the cytoplasm. The catalysed reaction is alpha-D-glucosamine 1-phosphate + acetyl-CoA = N-acetyl-alpha-D-glucosamine 1-phosphate + CoA + H(+). The enzyme catalyses N-acetyl-alpha-D-glucosamine 1-phosphate + UTP + H(+) = UDP-N-acetyl-alpha-D-glucosamine + diphosphate. The protein operates within nucleotide-sugar biosynthesis; UDP-N-acetyl-alpha-D-glucosamine biosynthesis; N-acetyl-alpha-D-glucosamine 1-phosphate from alpha-D-glucosamine 6-phosphate (route II): step 2/2. Its pathway is nucleotide-sugar biosynthesis; UDP-N-acetyl-alpha-D-glucosamine biosynthesis; UDP-N-acetyl-alpha-D-glucosamine from N-acetyl-alpha-D-glucosamine 1-phosphate: step 1/1. It functions in the pathway bacterial outer membrane biogenesis; LPS lipid A biosynthesis. Functionally, catalyzes the last two sequential reactions in the de novo biosynthetic pathway for UDP-N-acetylglucosamine (UDP-GlcNAc). The C-terminal domain catalyzes the transfer of acetyl group from acetyl coenzyme A to glucosamine-1-phosphate (GlcN-1-P) to produce N-acetylglucosamine-1-phosphate (GlcNAc-1-P), which is converted into UDP-GlcNAc by the transfer of uridine 5-monophosphate (from uridine 5-triphosphate), a reaction catalyzed by the N-terminal domain. This Azoarcus sp. (strain BH72) protein is Bifunctional protein GlmU.